The following is a 445-amino-acid chain: ATP-dependent rRNA helicase rrp3 (445 aa).

Positions 1-10 (MSKNSSRDSS) are enriched in basic and acidic residues. The interval 1 to 28 (MSKNSSRDSSPEEVSPDTETPSTTTAPK) is disordered. A compositionally biased stretch (low complexity) spans 17–28 (DTETPSTTTAPK). Positions 28-56 (KTFRELGVIDSLCEACEELGYTAPTPIQE) match the Q motif motif. Residues 59–229 (IPIALEGRDL…RASLSDPVRV (171 aa)) enclose the Helicase ATP-binding domain. Residue 72–79 (AETGSGKT) coordinates ATP. The DEAD box motif lies at 178–181 (DEAD). Residues 240-400 (KLLQSYLFIP…EYKPEKDEVM (161 aa)) enclose the Helicase C-terminal domain. Residues 415–445 (LTMRDMQDKDNKGRGPRNRKRTRDDLDQDDG) form a disordered region.

The protein belongs to the DEAD box helicase family. DDX47/RRP3 subfamily. As to quaternary structure, interacts with the SSU processome.

The protein resides in the nucleus. The catalysed reaction is ATP + H2O = ADP + phosphate + H(+). Functionally, ATP-dependent rRNA helicase required for pre-ribosomal RNA processing. Involved in the maturation of the 35S-pre-rRNA and to its cleavage to mature 18S rRNA. The polypeptide is ATP-dependent rRNA helicase rrp3 (Aspergillus terreus (strain NIH 2624 / FGSC A1156)).